The following is a 607-amino-acid chain: Elongation factor 4 (607 aa).

One can recognise a tr-type G domain in the interval 11 to 193 (SKIRNFSIIA…QIVEKVPAPT (183 aa)). Residues 23 to 28 (DHGKST) and 140 to 143 (NKID) contribute to the GTP site.

It belongs to the TRAFAC class translation factor GTPase superfamily. Classic translation factor GTPase family. LepA subfamily.

It localises to the cell membrane. The catalysed reaction is GTP + H2O = GDP + phosphate + H(+). Required for accurate and efficient protein synthesis under certain stress conditions. May act as a fidelity factor of the translation reaction, by catalyzing a one-codon backward translocation of tRNAs on improperly translocated ribosomes. Back-translocation proceeds from a post-translocation (POST) complex to a pre-translocation (PRE) complex, thus giving elongation factor G a second chance to translocate the tRNAs correctly. Binds to ribosomes in a GTP-dependent manner. This Bacillus mycoides (strain KBAB4) (Bacillus weihenstephanensis) protein is Elongation factor 4.